The chain runs to 298 residues: Junctional adhesion molecule B (298 aa).

Positions 1-28 are cleaved as a signal peptide; that stretch reads MARSPQGLLMLLLLHYLIVALDYHKANG. The Extracellular portion of the chain corresponds to 29 to 236; the sequence is FSASKDHRQE…GKRMQVDVLN (208 aa). The Ig-like V-type domain occupies 32–128; the sequence is SKDHRQEVTV…GQNLQEDKVM (97 aa). 2 disulfide bridges follow: C51–C110 and C156–C214. A glycan (N-linked (GlcNAc...) asparagine) is linked at N99. The Ig-like C2-type domain occupies 135 to 238; the sequence is PAVPACEVPT…RMQVDVLNIS (104 aa). A helical transmembrane segment spans residues 237–257; it reads ISGIIATVVVVAFVISVCGLG. Over 258–298 the chain is Cytoplasmic; it reads TCYAQRKGYFSKETSFQKGSPASKVTTMSENDFKHTKSFII.

This sequence belongs to the immunoglobulin superfamily. In terms of processing, the expression in Sertoli cells is regulated by TGFB3 through ubiquitin-mediated proteasomal degradation. Expressed by bone marrow stromal cells (at protein level). Expressed in skin (at protein level). Expressed in testis by Sertoli cells (at protein level). Expressed by dorsal root ganglion and spinal cord neurons.

The protein resides in the cell membrane. The protein localises to the cell junction. It is found in the tight junction. In terms of biological role, junctional adhesion protein that mediates heterotypic cell-cell interactions with its cognate receptor JAM3 to regulate different cellular processes. Plays a role in homing and mobilization of hematopoietic stem and progenitor cells within the bone marrow. At the surface of bone marrow stromal cells, it contributes to the retention of the hematopoietic stem and progenitor cells expressing JAM3. Plays a central role in leukocytes extravasation by facilitating not only transmigration but also tethering and rolling of leukocytes along the endothelium. Tethering and rolling of leukocytes are dependent on the binding by JAM2 of the integrin alpha-4/beta-1. Plays a role in spermatogenesis where JAM2 and JAM3, which are respectively expressed by Sertoli and germ cells, mediate an interaction between both cell types and play an essential role in the anchorage of germ cells onto Sertoli cells and the assembly of cell polarity complexes during spermatid differentiation. Also functions as an inhibitory somatodendritic cue that prevents the myelination of non-axonal parts of neurons. During myogenesis, it is involved in myocyte fusion. May also play a role in angiogenesis. The polypeptide is Junctional adhesion molecule B (Mus musculus (Mouse)).